A 1047-amino-acid chain; its full sequence is Protein masquerade (1047 aa).

The signal sequence occupies residues 1–30 (MPRHSSTMSRLVLPLIFSILLVSKPSPSQA). Residues 54-87 (KDCPGVCVHTLATLICYEVLDDVACPSPSMKCCI) are CLIP 1. Intrachain disulfides connect cysteine 56–cysteine 85, cysteine 60–cysteine 78, and cysteine 69–cysteine 86. Residue asparagine 95 is glycosylated (N-linked (GlcNAc...) asparagine). Low complexity-rich tracts occupy residues 98–139 (AVRA…STTP) and 148–175 (KRPATSSTTKATVATTKKPSTTKKVATA). Residues 98–189 (AVRATTTPKT…KEEATKADDA (92 aa)) form a disordered region. A compositionally biased stretch (basic and acidic residues) spans 176 to 189 (KPKDKEEATKADDA). Residues 192–224 (DCTGVCVADRIAEYCEAYLTSDGLCKEGTKCCV) form a CLIP 2 region. Disulfide bonds link cysteine 193–cysteine 222, cysteine 197–cysteine 216, and cysteine 206–cysteine 223. Residue asparagine 251 is glycosylated (N-linked (GlcNAc...) asparagine). The segment at 252 to 335 (QTLSEKSAPA…PLSNKLKSGQ (84 aa)) is disordered. The segment covering 263–280 (SSSTSTTSTTTTTSTTTT) has biased composition (low complexity). Asparagine 287 carries N-linked (GlcNAc...) asparagine glycosylation. Residues 307 to 325 (AAEEEEEQETEEDGEEEEP) are compositionally biased toward acidic residues. The segment at 343-374 (ECEGECMNGIFAIFCDDIDSDAFCPGEESCCV) is CLIP 3. Cystine bridges form between cysteine 344/cysteine 372, cysteine 348/cysteine 366, and cysteine 357/cysteine 373. A disordered region spans residues 376–428 (GGASEATPSSKAPPTKPAIKHAPKPAAKPARPASPPPAPPSSTSGGGGGGDFL). The segment at 457 to 492 (RCPGFCLLNIMAAFCERPSVLVSTPTTCAKGSVCCD) is CLIP 4. Intrachain disulfides connect cysteine 458–cysteine 490, cysteine 462–cysteine 484, and cysteine 471–cysteine 491. Positions 498-527 (APKPKLPPPTPSPTASPTAPPYVLPNTPSP) are disordered. Residues 501 to 527 (PKLPPPTPSPTASPTAPPYVLPNTPSP) are compositionally biased toward pro residues. The tract at residues 532-567 (ECPGSCIVSLLSFTCFKNAEMTDLFRCKRSGQICCA) is CLIP 5. 3 disulfides stabilise this stretch: cysteine 533–cysteine 565, cysteine 537–cysteine 558, and cysteine 546–cysteine 566. Asparagine 582 is a glycosylation site (N-linked (GlcNAc...) asparagine). The interval 583 to 673 (DTAYYPAPPP…TTTTTTTTPR (91 aa)) is disordered. 3 stretches are compositionally biased toward pro residues: residues 588 to 606 (PAPPPPPIGPPQAYPPQTP), 613 to 638 (NPPPQGPPPQMAPHHPNPYQPPPPAP), and 650 to 661 (GLPPQPQPPMTT). Over residues 662-672 (PPTTTTTTTTP) the composition is skewed to low complexity. Cystine bridges form between cysteine 682–cysteine 916, cysteine 829–cysteine 845, cysteine 930–cysteine 1001, cysteine 961–cysteine 981, and cysteine 991–cysteine 1019. 2 N-linked (GlcNAc...) asparagine glycosylation sites follow: asparagine 726 and asparagine 794. A peptidase S1 region spans residues 803–1043 (VVGGEDGENG…FIGWINQIIS (241 aa)).

Belongs to the peptidase S1 family. CLIP subfamily. In terms of processing, proteolytically cleaved and thereafter secreted.

The protein resides in the secreted. Its subcellular location is the cell projection. It is found in the axon. In terms of biological role, in embryogenesis, has a role in somatic muscle attachment and in the development of axonal pathways probably by stabilizing cell-matrix adhesion and/or by acting as a competitive antagonist of serine proteases. The sequence is that of Protein masquerade from Drosophila melanogaster (Fruit fly).